Reading from the N-terminus, the 338-residue chain is Ketol-acid reductoisomerase (NADP(+)) (338 aa).

Positions 1–181 (MKVFYDKDAD…GGGRAGIIET (181 aa)) constitute a KARI N-terminal Rossmann domain. Residues 24–27 (YGSQ), Arg-47, and Ser-52 contribute to the NADP(+) site. Residue His-107 is part of the active site. Residue Gly-133 participates in NADP(+) binding. Residues 182-327 (NFREETETDL…EKLRAMMPWI (146 aa)) enclose the KARI C-terminal knotted domain. 4 residues coordinate Mg(2+): Asp-190, Glu-194, Glu-226, and Glu-230. A substrate-binding site is contributed by Ser-251.

This sequence belongs to the ketol-acid reductoisomerase family. It depends on Mg(2+) as a cofactor.

It catalyses the reaction (2R)-2,3-dihydroxy-3-methylbutanoate + NADP(+) = (2S)-2-acetolactate + NADPH + H(+). It carries out the reaction (2R,3R)-2,3-dihydroxy-3-methylpentanoate + NADP(+) = (S)-2-ethyl-2-hydroxy-3-oxobutanoate + NADPH + H(+). Its pathway is amino-acid biosynthesis; L-isoleucine biosynthesis; L-isoleucine from 2-oxobutanoate: step 2/4. It participates in amino-acid biosynthesis; L-valine biosynthesis; L-valine from pyruvate: step 2/4. Functionally, involved in the biosynthesis of branched-chain amino acids (BCAA). Catalyzes an alkyl-migration followed by a ketol-acid reduction of (S)-2-acetolactate (S2AL) to yield (R)-2,3-dihydroxy-isovalerate. In the isomerase reaction, S2AL is rearranged via a Mg-dependent methyl migration to produce 3-hydroxy-3-methyl-2-ketobutyrate (HMKB). In the reductase reaction, this 2-ketoacid undergoes a metal-dependent reduction by NADPH to yield (R)-2,3-dihydroxy-isovalerate. The chain is Ketol-acid reductoisomerase (NADP(+)) from Cupriavidus pinatubonensis (strain JMP 134 / LMG 1197) (Cupriavidus necator (strain JMP 134)).